A 171-amino-acid chain; its full sequence is Galectin-related protein (171 aa).

In terms of domain architecture, Galectin spans Pro38–Leu170.

Its function is as follows. Does not bind lactose, and may not bind carbohydrates. The protein is Galectin-related protein (lgalsl) of Xenopus tropicalis (Western clawed frog).